A 274-amino-acid polypeptide reads, in one-letter code: Large ribosomal subunit protein uL2 (274 aa).

The tract at residues 224–259 is disordered; the sequence is AMNPVDHPHGGGEGRTSGGRHPVTPWGIPTKGYKTR.

It belongs to the universal ribosomal protein uL2 family. Part of the 50S ribosomal subunit. Forms a bridge to the 30S subunit in the 70S ribosome.

Its function is as follows. One of the primary rRNA binding proteins. Required for association of the 30S and 50S subunits to form the 70S ribosome, for tRNA binding and peptide bond formation. It has been suggested to have peptidyltransferase activity; this is somewhat controversial. Makes several contacts with the 16S rRNA in the 70S ribosome. The chain is Large ribosomal subunit protein uL2 from Geobacter sp. (strain M21).